Reading from the N-terminus, the 64-residue chain is uncharacterized protein (64 aa).

Polar residues predominate over residues 1 to 14 (MFNFDPTDQPTDQH). A disordered region spans residues 1–42 (MFNFDPTDQPTDQHLLQLPTDPHPLQQPIDPHPPPQPNNNLP).

This is an uncharacterized protein from Dictyostelium discoideum (Social amoeba).